The chain runs to 536 residues: DEAD-box ATP-dependent RNA helicase 41 (536 aa).

Residues 1–10 show a composition bias toward basic and acidic residues; sequence MEQEENHSAD. A disordered region spans residues 1–25; that stretch reads MEQEENHSADHLSAQPGNGNELEES. The HIT-type zinc finger occupies 40-69; that stretch reads GEPRCVICGRYGEYICDQTDDDICSVECKT. Residues 137 to 165 carry the Q motif motif; sequence MCFSSSGLPEKLVLNLEAAGYVMPTPVQM. Residues 168-344 form the Helicase ATP-binding domain; it reads IPSSICNRSL…NSLAKNAIHI (177 aa). 181 to 188 provides a ligand contact to ATP; that stretch reads ADTGSGKT. The DEAD box motif lies at 293–296; that stretch reads DEVD. The Helicase C-terminal domain occupies 355–518; it reads SVKQVVIWVE…PIPRELANSK (164 aa).

Belongs to the DEAD box helicase family. DDX59 subfamily.

The enzyme catalyses ATP + H2O = ADP + phosphate + H(+). The protein is DEAD-box ATP-dependent RNA helicase 41 of Oryza sativa subsp. japonica (Rice).